Reading from the N-terminus, the 144-residue chain is Neuritin-B (144 aa).

An N-terminal signal peptide occupies residues Met1–Ala27. A lipid anchor (GPI-anchor amidated serine) is attached at Ser114. Positions Thr115 to Gln144 are cleaved as a propeptide — removed in mature form.

Belongs to the neuritin family.

The protein resides in the cell membrane. Functionally, modulates postsynaptic dendritic arbor elaboration and synaptic maturation. This is Neuritin-B (nrn1-b) from Xenopus laevis (African clawed frog).